We begin with the raw amino-acid sequence, 131 residues long: uncharacterized protein (131 aa).

Positions 1-116 (MYMARMLSEM…EMLEASSIQC (116 aa)) constitute a CMP/dCMP-type deaminase domain.

This is an uncharacterized protein from Caenorhabditis elegans.